The sequence spans 616 residues: Proline--tRNA ligase (616 aa).

The protein belongs to the class-II aminoacyl-tRNA synthetase family. ProS type 1 subfamily. Homodimer.

It localises to the cytoplasm. It carries out the reaction tRNA(Pro) + L-proline + ATP = L-prolyl-tRNA(Pro) + AMP + diphosphate. Catalyzes the attachment of proline to tRNA(Pro) in a two-step reaction: proline is first activated by ATP to form Pro-AMP and then transferred to the acceptor end of tRNA(Pro). As ProRS can inadvertently accommodate and process non-cognate amino acids such as alanine and cysteine, to avoid such errors it has two additional distinct editing activities against alanine. One activity is designated as 'pretransfer' editing and involves the tRNA(Pro)-independent hydrolysis of activated Ala-AMP. The other activity is designated 'posttransfer' editing and involves deacylation of mischarged Ala-tRNA(Pro). The misacylated Cys-tRNA(Pro) is not edited by ProRS. This chain is Proline--tRNA ligase, found in Lactococcus lactis subsp. lactis (strain IL1403) (Streptococcus lactis).